The primary structure comprises 55 residues: MEFTTAMFGTSLIFTTSTQSKHNLVNNCCCSSSTSESSMPASCACTKCGCKTCKC.

The protein belongs to the metallothionein superfamily. Type 11 family.

This Yarrowia lipolytica (strain CLIB 122 / E 150) (Yeast) protein is Metallothionein-1 (MTP1).